Reading from the N-terminus, the 804-residue chain is Probable cadmium-transporting ATPase (804 aa).

HMA domains lie at 11 to 74 (DKQV…LKVA) and 89 to 152 (DKNV…LKVI). Cd(2+) contacts are provided by Cys22, Cys25, Cys100, and Cys103. The next 5 helical transmembrane spans lie at 183-203 (STLL…FVNG), 207-227 (LVTS…LFKV), 248-268 (IGAA…LFAI), 413-433 (IIMV…GGSW), and 441-461 (LAVL…ISIV). Asp492 serves as the catalytic 4-aspartylphosphate intermediate. The next 2 membrane-spanning stretches (helical) occupy residues 749–771 (LNII…LLVI) and 776–798 (TLWI…SLRL).

Belongs to the cation transport ATPase (P-type) (TC 3.A.3) family. Type IB subfamily.

Its subcellular location is the cell membrane. It catalyses the reaction Cd(2+)(in) + ATP + H2O = Cd(2+)(out) + ADP + phosphate + H(+). Its function is as follows. Couples the hydrolysis of ATP with the export of cadmium. Involved in cadmium resistance. This is Probable cadmium-transporting ATPase (cadA) from Staphylococcus aureus.